Here is a 659-residue protein sequence, read N- to C-terminus: ATP-binding cassette sub-family D member 3 (659 aa).

The segment at 1 to 61 (MAAFSKYLTA…GKKERAVVDK (61 aa)) is interaction with PEX19. Residue asparagine 12 is glycosylated (N-linked (GlcNAc...) asparagine). Lysine 61 is subject to N6-acetyllysine. The chain crosses the membrane as a helical span at residues 84-104 (GYLLLIAVMLVSRTYCDVWMI). Residues 85 to 372 (YLLLIAVMLV…MLLRMSQALG (288 aa)) form the ABC transmembrane type-1 domain. Asparagine 106 carries an N-linked (GlcNAc...) asparagine glycan. Residues 126-146 (LFNFIAAMPLISLVNNFLKYG) form a helical membrane-spanning segment. N-linked (GlcNAc...) asparagine glycosylation is present at asparagine 206. Residues 224–244 (AIGAQGPASMMAYLLVSGLFL) traverse the membrane as a helical segment. Lysine 260 is modified (N6-acetyllysine). Residues 313–333 (MGFIDSIIAKYVATVVGYLVV) form a helical membrane-spanning segment. Residue lysine 399 is modified to N6-acetyllysine. A Phosphoserine modification is found at serine 424. In terms of domain architecture, ABC transporter spans 434-659 (INTDNIIKFD…ITEDTVEFGS (226 aa)). 473-480 (GPNGCGKS) is an ATP binding site. Position 533 is an N6-acetyllysine (lysine 533). The residue at position 659 (serine 659) is a Phosphoserine.

Belongs to the ABC transporter superfamily. ABCD family. Peroxisomal fatty acyl CoA transporter (TC 3.A.1.203) subfamily. Homodimers. Can form heterodimers with ABCD1 and ABCD2. Dimerization is necessary to form an active transporter. Interacts with PEX19; mediates the targeting of ABCD3 to peroxisomes. In terms of processing, ubiquitinated by PEX2 during pexophagy in response to starvation, leading to its degradation.

It localises to the peroxisome membrane. It carries out the reaction a very long-chain fatty acyl-CoA + H2O = a very long-chain fatty acid + CoA + H(+). The catalysed reaction is a very long-chain fatty acid(in) + ATP + H2O = a very long-chain fatty acid(out) + ADP + phosphate + H(+). It catalyses the reaction a long-chain fatty acyl-CoA + H2O = a long-chain fatty acid + CoA + H(+). The enzyme catalyses a long-chain fatty acid(in) + ATP + H2O = a long-chain fatty acid(out) + ADP + phosphate + H(+). It carries out the reaction pristanoyl-CoA + H2O = 2,6,10,14-tetramethylpentadecanoate + CoA + H(+). The catalysed reaction is 2,6,10,14-tetramethylpentadecanoate(in) + ATP + H2O = 2,6,10,14-tetramethylpentadecanoate(out) + ADP + phosphate + H(+). It catalyses the reaction hexadecanedioyl-CoA + H2O = hexadecanedioate + CoA + H(+). The enzyme catalyses hexadecanedioate(in) + ATP + H2O = hexadecanedioate(out) + ADP + phosphate + H(+). It carries out the reaction (5Z,8Z,11Z,14Z,17Z)-eicosapentaenoyl-CoA + H2O = (5Z,8Z,11Z,14Z,17Z)-eicosapentaenoate + CoA + H(+). The catalysed reaction is (5Z,8Z,11Z,14Z,17Z)-eicosapentaenoate(in) + ATP + H2O = (5Z,8Z,11Z,14Z,17Z)-eicosapentaenoate(out) + ADP + phosphate + H(+). It catalyses the reaction (4Z,7Z,10Z,13Z,16Z,19Z)-docosahexaenoyl-CoA + H2O = (4Z,7Z,10Z,13Z,16Z,19Z)-docosahexaenoate + CoA + H(+). The enzyme catalyses (4Z,7Z,10Z,13Z,16Z,19Z)-docosahexaenoate(in) + ATP + H2O = (4Z,7Z,10Z,13Z,16Z,19Z)-docosahexaenoate(out) + ADP + phosphate + H(+). Functionally, broad substrate specificity ATP-dependent transporter of the ATP-binding cassette (ABC) family that catalyzes the transport of long-chain fatty acids (LCFA)-CoA, dicarboxylic acids-CoA, long-branched-chain fatty acids-CoA and bile acids from the cytosol to the peroxisome lumen for beta-oxydation. Has fatty acyl-CoA thioesterase and ATPase activities. Probably hydrolyzes fatty acyl-CoAs into free fatty acids prior to their ATP-dependent transport into peroxisomes. Thus, play a role in regulation of LCFAs and energy metabolism namely, in the degradation and biosynthesis of fatty acids by beta-oxidation. The polypeptide is ATP-binding cassette sub-family D member 3 (Abcd3) (Mus musculus (Mouse)).